We begin with the raw amino-acid sequence, 213 residues long: Calcineurin B-like protein 8 (213 aa).

The N-myristoyl glycine moiety is linked to residue G2. EF-hand domains are found at residues 31–66 (EVEA…RNSN), 67–102 (KKNL…FHPE), 104–139 (PLGD…LLNE), and 148–183 (AVEQ…NPAL). The Ca(2+) site is built by D161, N163, D165, K167, and E172.

It belongs to the calcineurin regulatory subunit family. In terms of assembly, homodimer. Expressed at low levels in roots, shoots, culms, leaves and young spikelets.

The protein resides in the cell membrane. Acts as a calcium sensor. May function as positive regulator of salt stress responses. CBL proteins interact with CIPK serine-threonine protein kinases. Binding of a CBL protein to the regulatory NAF domain of a CIPK protein lead to the activation of the kinase in a calcium-dependent manner. The protein is Calcineurin B-like protein 8 (CBL8) of Oryza sativa subsp. japonica (Rice).